A 466-amino-acid chain; its full sequence is Secreted RxLR effector protein 101 (466 aa).

An N-terminal signal peptide occupies residues 1-21; it reads MRGAYSVITALLVVASSQIAA. The RxLR-dEER signature appears at 48–63; the sequence is RYLRGSQHVHDSNEER. Disordered regions lie at residues 99-127 and 384-405; these read KMPH…GANA and RTFN…VRSS. Positions 109–121 are enriched in basic residues; the sequence is KVSRVTRTGKKMT. The segment covering 385 to 395 has biased composition (polar residues); that stretch reads TFNGNTDTASL.

It belongs to the RxLR effector family.

It localises to the secreted. The protein resides in the host nucleus. In terms of biological role, secreted effector that partially suppresses the host cell death induced by cell death-inducing proteins. This chain is Secreted RxLR effector protein 101, found in Plasmopara viticola (Downy mildew of grapevine).